A 431-amino-acid chain; its full sequence is Phosphate regulon sensor protein PhoR (431 aa).

Over 1–9 the chain is Cytoplasmic; sequence MLERLSWKR. The chain crosses the membrane as a helical span at residues 10–28; sequence LVLELLLCCLPAFILGAFF. The Periplasmic segment spans residues 29 to 32; it reads GYLP. A helical membrane pass occupies residues 33 to 51; sequence WFLLASVTGLLIWHFWNLL. Residues 52–431 lie on the Cytoplasmic side of the membrane; it reads RLSWWLWVDR…PERLIAKNSD (380 aa). The 77-residue stretch at 96 to 172 folds into the PAS domain; the sequence is LIKRFRSGAE…RPLNLVLNTG (77 aa). In terms of domain architecture, Histidine kinase spans 210-425; sequence NVSHELRTPL…RFSFVIPERL (216 aa). The residue at position 213 (histidine 213) is a Phosphohistidine; by autocatalysis.

Its subcellular location is the cell inner membrane. It catalyses the reaction ATP + protein L-histidine = ADP + protein N-phospho-L-histidine.. In terms of biological role, member of the two-component regulatory system PhoR/PhoB involved in the phosphate regulon genes expression. PhoR may function as a membrane-associated protein kinase that phosphorylates PhoB in response to environmental signals. The polypeptide is Phosphate regulon sensor protein PhoR (phoR) (Escherichia coli (strain K12)).